A 148-amino-acid chain; its full sequence is Copper transport protein ctr6 (148 aa).

Residues 1 to 33 (MNHGGNSTMRHCSMKMTFNTDYDNLCIVFKSWH) are Extracellular-facing. The helical transmembrane segment at 34 to 54 (IGNLSQFLLSLLAIAILGYLF) threads the bilayer. The Cytoplasmic segment spans residues 55–108 (ERLRSFTSLKETEFQRGYAGQQSEGLLTHHSKSLKSGRPFRLCALYAVQLVFSY). The chain crosses the membrane as a helical span at residues 109-129 (FLMLVAMTYNAYVILAIAIGA). At 130–148 (AFGYRRSHCDTVQTVGLCH) the chain is on the extracellular side.

This sequence belongs to the copper transporter (Ctr) (TC 1.A.56) family. SLC31A subfamily. Homotrimer.

Its subcellular location is the vacuole membrane. Mobilizes stored copper from the vacuole to the cytoplasm under conditions of copper limitation. This Schizosaccharomyces pombe (strain 972 / ATCC 24843) (Fission yeast) protein is Copper transport protein ctr6 (ctr6).